Here is a 411-residue protein sequence, read N- to C-terminus: LL-diaminopimelate aminotransferase (411 aa).

Substrate contacts are provided by Tyr15 and Gly42. Pyridoxal 5'-phosphate contacts are provided by residues Tyr72, 108-109, Tyr132, Asn187, Tyr218, and 246-248; these read SK and SFS. Substrate-binding residues include Lys109, Tyr132, and Asn187. N6-(pyridoxal phosphate)lysine is present on Lys249. Pyridoxal 5'-phosphate contacts are provided by Arg257 and Asn292. Substrate is bound by residues Asn292 and Arg388.

This sequence belongs to the class-I pyridoxal-phosphate-dependent aminotransferase family. LL-diaminopimelate aminotransferase subfamily. As to quaternary structure, homodimer. The cofactor is pyridoxal 5'-phosphate.

The enzyme catalyses (2S,6S)-2,6-diaminopimelate + 2-oxoglutarate = (S)-2,3,4,5-tetrahydrodipicolinate + L-glutamate + H2O + H(+). It participates in amino-acid biosynthesis; L-lysine biosynthesis via DAP pathway; LL-2,6-diaminopimelate from (S)-tetrahydrodipicolinate (aminotransferase route): step 1/1. Its function is as follows. Involved in the synthesis of meso-diaminopimelate (m-DAP or DL-DAP), required for both lysine and peptidoglycan biosynthesis. Catalyzes the direct conversion of tetrahydrodipicolinate to LL-diaminopimelate. The protein is LL-diaminopimelate aminotransferase of Nostoc punctiforme (strain ATCC 29133 / PCC 73102).